The following is a 257-amino-acid chain: Regulator of G-protein signaling 7-binding protein (257 aa).

Residues 1-45 (MSSAPNGRKKRPSRSTRSSIFQISKPPLQTGDWERRGSGSESAHK) are disordered. Residues 32–45 (DWERRGSGSESAHK) show a composition bias toward basic and acidic residues. The Nuclear localization signal motif lies at 242–247 (RRRKRR). S-palmitoyl cysteine attachment occurs at residues Cys252 and Cys253.

The protein belongs to the RGS7BP/RGS9BP family. In terms of assembly, interacts with 'R7' family proteins RGS6, RGS7, RGS9 and RGS11. Component of some R7-Gbeta5 complex composed of some R7 protein (RGS6, RGS7, RGS9 or RGS11), Gbeta5 (GNB5) and RGS7BP. Post-translationally, palmitoylated. Undergoes rapid palmitoylation turnover. De novo and turnover palmitoylation are both mediated by ZDHHC2. Palmitoylation regulates the cell membrane and nuclear shuttling and the regulation of GPCR signaling. Upon depalmitoylation, it is targeted from the plasma membrane into the nucleus. GPCR signaling inhibits depalmitoylation and promotes localization to the plasma membrane.

The protein resides in the nucleus. It is found in the cytoplasm. It localises to the cell membrane. Functionally, regulator of G protein-coupled receptor (GPCR) signaling. Regulatory subunit of the R7-Gbeta5 complexes that acts by controlling the subcellular location of the R7-Gbeta5 complexes. When palmitoylated, it targets the R7-Gbeta5 complexes to the plasma membrane, leading to inhibit G protein alpha subunits. When it is unpalmitoylated, the R7-Gbeta5 complexes undergo a nuclear/cytoplasmic shuttling. May also act by controlling the proteolytic stability of R7 proteins, probably by protecting them from degradation. This chain is Regulator of G-protein signaling 7-binding protein (RGS7BP), found in Bos taurus (Bovine).